Here is a 129-residue protein sequence, read N- to C-terminus: D-ribose pyranase (129 aa).

The active-site Proton donor is His-20. Substrate-binding positions include Asp-28, His-96, and 118-120 (YAN).

Belongs to the RbsD / FucU family. RbsD subfamily. As to quaternary structure, homodecamer.

It localises to the cytoplasm. The catalysed reaction is beta-D-ribopyranose = beta-D-ribofuranose. It participates in carbohydrate metabolism; D-ribose degradation; D-ribose 5-phosphate from beta-D-ribopyranose: step 1/2. Functionally, catalyzes the interconversion of beta-pyran and beta-furan forms of D-ribose. The chain is D-ribose pyranase from Shouchella clausii (strain KSM-K16) (Alkalihalobacillus clausii).